The following is a 375-amino-acid chain: Queuine tRNA-ribosyltransferase (375 aa).

Asp89 acts as the Proton acceptor in catalysis. Substrate is bound by residues 89-93 (DSGGF), Asp143, Gln187, and Gly214. The interval 245-251 (GVGKPED) is RNA binding. Residue Asp264 is the Nucleophile of the active site. The interval 269 to 273 (TRNAR) is RNA binding; important for wobble base 34 recognition. 4 residues coordinate Zn(2+): Cys302, Cys304, Cys307, and His333.

It belongs to the queuine tRNA-ribosyltransferase family. In terms of assembly, homodimer. Within each dimer, one monomer is responsible for RNA recognition and catalysis, while the other monomer binds to the replacement base PreQ1. The cofactor is Zn(2+).

It carries out the reaction 7-aminomethyl-7-carbaguanine + guanosine(34) in tRNA = 7-aminomethyl-7-carbaguanosine(34) in tRNA + guanine. Its pathway is tRNA modification; tRNA-queuosine biosynthesis. In terms of biological role, catalyzes the base-exchange of a guanine (G) residue with the queuine precursor 7-aminomethyl-7-deazaguanine (PreQ1) at position 34 (anticodon wobble position) in tRNAs with GU(N) anticodons (tRNA-Asp, -Asn, -His and -Tyr). Catalysis occurs through a double-displacement mechanism. The nucleophile active site attacks the C1' of nucleotide 34 to detach the guanine base from the RNA, forming a covalent enzyme-RNA intermediate. The proton acceptor active site deprotonates the incoming PreQ1, allowing a nucleophilic attack on the C1' of the ribose to form the product. After dissociation, two additional enzymatic reactions on the tRNA convert PreQ1 to queuine (Q), resulting in the hypermodified nucleoside queuosine (7-(((4,5-cis-dihydroxy-2-cyclopenten-1-yl)amino)methyl)-7-deazaguanosine). In Shigella flexneri serotype 5b (strain 8401), this protein is Queuine tRNA-ribosyltransferase.